Here is a 129-residue protein sequence, read N- to C-terminus: uncharacterized protein (129 aa).

The segment covering Asn-86–Glu-96 has biased composition (acidic residues). The segment at Asn-86–Asp-129 is disordered. A compositionally biased stretch (polar residues) spans Glu-103–Phe-117.

This sequence belongs to the asfivirus D129L family.

This is an uncharacterized protein from African swine fever virus (isolate Tick/South Africa/Pretoriuskop Pr4/1996) (ASFV).